Consider the following 154-residue polypeptide: 17 kDa A-type inclusion protein (154 aa).

The stretch at 17-85 (QKDCSDKLDR…YKRELERDRY (69 aa)) forms a coiled coil. Positions 88 to 154 (SRYLTSSSDP…DVEPEHPPAF (67 aa)) are disordered.

The chain is 17 kDa A-type inclusion protein from Bos taurus (Bovine).